The sequence spans 435 residues: Glutamyl-tRNA reductase (435 aa).

Substrate-binding positions include 49–52, Ser109, 114–116, and Gln120; these read TCNR and EGQ. Cys50 (nucleophile) is an active-site residue. 198-203 provides a ligand contact to NADP(+); that stretch reads GAGRMS.

Belongs to the glutamyl-tRNA reductase family. Homodimer.

The catalysed reaction is (S)-4-amino-5-oxopentanoate + tRNA(Glu) + NADP(+) = L-glutamyl-tRNA(Glu) + NADPH + H(+). It functions in the pathway porphyrin-containing compound metabolism; protoporphyrin-IX biosynthesis; 5-aminolevulinate from L-glutamyl-tRNA(Glu): step 1/2. It participates in porphyrin-containing compound metabolism; chlorophyll biosynthesis. Catalyzes the NADPH-dependent reduction of glutamyl-tRNA(Glu) to glutamate 1-semialdehyde (GSA). This Prochlorococcus marinus (strain MIT 9515) protein is Glutamyl-tRNA reductase.